A 299-amino-acid polypeptide reads, in one-letter code: tRNA dimethylallyltransferase (299 aa).

13-20 (GPTASGKT) provides a ligand contact to ATP. Substrate is bound at residue 15–20 (TASGKT). Positions 38 to 41 (DSRQ) are interaction with substrate tRNA.

It belongs to the IPP transferase family. Monomer. The cofactor is Mg(2+).

It carries out the reaction adenosine(37) in tRNA + dimethylallyl diphosphate = N(6)-dimethylallyladenosine(37) in tRNA + diphosphate. Functionally, catalyzes the transfer of a dimethylallyl group onto the adenine at position 37 in tRNAs that read codons beginning with uridine, leading to the formation of N6-(dimethylallyl)adenosine (i(6)A). This chain is tRNA dimethylallyltransferase, found in Synechococcus sp. (strain CC9605).